A 414-amino-acid polypeptide reads, in one-letter code: ORC1-type DNA replication protein 1 (414 aa).

ATP-binding positions include 70-74 (TGKTA), Tyr213, and Arg225.

This sequence belongs to the CDC6/cdc18 family.

Its function is as follows. Involved in regulation of DNA replication. This chain is ORC1-type DNA replication protein 1 (cdc6-1), found in Methanosarcina mazei (strain ATCC BAA-159 / DSM 3647 / Goe1 / Go1 / JCM 11833 / OCM 88) (Methanosarcina frisia).